We begin with the raw amino-acid sequence, 176 residues long: MASSSGNDDDLTIPRAAINKMIKETLPNVRVANDARELVVNCCTEFIHLISSEANEICNKSEKKTISPEHVIQALESLGFGSYISEVKEVLQECKTVALKRRKASSRLENLGIPEEELLRQQQELFAKARQQQAELAQQEWLQMQQAAQQAQLAAASASASTQAGSSQDEEDDDDI.

Alanine 2 carries the N-acetylalanine modification. Residues 12 to 75 (TIPRAAINKM…ISPEHVIQAL (64 aa)) enclose the Histone-fold domain. A Nuclear localization signal motif is present at residues 100 to 103 (KRRK). Residues serine 105, serine 106, serine 166, and serine 167 each carry the phosphoserine modification. Residues 152–167 (QLAAASASASTQAGSS) are compositionally biased toward low complexity. A disordered region spans residues 152–176 (QLAAASASASTQAGSSQDEEDDDDI).

This sequence belongs to the NC2 beta/DR1 family. As to quaternary structure, heterodimer with DRAP1. DR1 exists in solution as a homotetramer that dissociates during interaction with TBP and then, after complexing with TBP, reassociates at a slow rate, to reconstitute the tetramer. Interacts with NFIL3. Component of the ADA2A-containing complex (ATAC), composed of KAT14, KAT2A, TADA2L, TADA3L, ZZ3, MBIP, WDR5, YEATS2, CCDC101 and DR1. In terms of processing, phosphorylation regulates its interaction with TBP. Not phosphorylated when bound to DRAP1.

The protein resides in the nucleus. Functionally, the association of the DR1/DRAP1 heterodimer with TBP results in a functional repression of both activated and basal transcription of class II genes. This interaction precludes the formation of a transcription-competent complex by inhibiting the association of TFIIA and/or TFIIB with TBP. Can bind to DNA on its own. Component of the ATAC complex, a complex with histone acetyltransferase activity on histones H3 and H4. This is Protein Dr1 (Dr1) from Mus musculus (Mouse).